Reading from the N-terminus, the 501-residue chain is Putative glycogen synthase kinase-3 homolog (501 aa).

Residues Y33 to F317 enclose the Protein kinase domain. ATP contacts are provided by residues V39–V47 and K62. D158 acts as the Proton acceptor in catalysis. Residue Y193 is modified to Phosphotyrosine. Disordered stretches follow at residues L355–V427 and S446–N501. The span at E381–Q390 shows a compositional bias: basic and acidic residues. Composition is skewed to acidic residues over residues E451–D471 and D482–N501.

It belongs to the protein kinase superfamily. CMGC Ser/Thr protein kinase family. GSK-3 subfamily. Phosphorylation on Tyr-193 is necessary for the activity.

It catalyses the reaction L-seryl-[tau protein] + ATP = O-phospho-L-seryl-[tau protein] + ADP + H(+). The catalysed reaction is L-threonyl-[tau protein] + ATP = O-phospho-L-threonyl-[tau protein] + ADP + H(+). The chain is Putative glycogen synthase kinase-3 homolog (gskt) from Drosophila melanogaster (Fruit fly).